The chain runs to 181 residues: dTTP/UTP pyrophosphatase (181 aa).

Asp-67 functions as the Proton acceptor in the catalytic mechanism.

Belongs to the Maf family. YhdE subfamily. A divalent metal cation serves as cofactor.

It localises to the cytoplasm. The catalysed reaction is dTTP + H2O = dTMP + diphosphate + H(+). It catalyses the reaction UTP + H2O = UMP + diphosphate + H(+). Its function is as follows. Nucleoside triphosphate pyrophosphatase that hydrolyzes dTTP and UTP. May have a dual role in cell division arrest and in preventing the incorporation of modified nucleotides into cellular nucleic acids. This chain is dTTP/UTP pyrophosphatase, found in Latilactobacillus sakei subsp. sakei (strain 23K) (Lactobacillus sakei subsp. sakei).